The following is an 851-amino-acid chain: Envelope glycoprotein gp160 (851 aa).

A signal peptide spans 1–24; the sequence is MEPGRNQLLVAILLTSACLIYCKQ. Residues 25–669 lie on the Extracellular side of the membrane; it reads YVTVFYGIPA…LTSWIKYIQY (645 aa). N37 is a glycosylation site (N-linked (GlcNAc...) asparagine; by host). Cysteines 44 and 57 form a disulfide. N70, N114, N127, N134, N142, N157, N184, N195, N227, N230, N261, N267, N278, N289, N299, N355, N361, N388, N398, N401, N438, N453, and N456 each carry an N-linked (GlcNAc...) asparagine; by host glycan. 5 disulfide bridges follow: C101–C203, C108–C194, C113–C154, C216–C246, and C226–C238. The segment at 113-153 is V1; that stretch reads CNITSGTTATPSPPNITIIDENSTCIGDNNCTGLGKEEVVE. The V2 stretch occupies residues 154-194; that stretch reads CEFNMTGLEQDKKRKYNDAWYSRDVVCDKTNGTGTCYMRHC. The segment at 294–327 is V3; it reads CKRPGNKTVVPITLMSGRRFHSRPVYNKKPGQAW. Residues C294 and C328 are joined by a disulfide bond. 2 disulfide bridges follow: C380/C437 and C387/C410. The interval 387 to 410 is V4; it reads CNMTWFLNWVENKTNQTHGNYAPC. Residues 453–459 form a V5 region; the sequence is NQTNITF. The interval 502–522 is fusion peptide; it reads GVFVLGFLGFLATAGSAMGGA. The tract at residues 565 to 581 is immunosuppression; the sequence is LQARVTAIEKYLKDQAQ. N601, N610, and N626 each carry an N-linked (GlcNAc...) asparagine; by host glycan. Residues 647–668 are MPER; binding to GalCer; that stretch reads KLNSWDVFGNWFDLTSWIKYIQ. Residues 670–690 form a helical membrane-spanning segment; the sequence is GVYIVVGIIGLRIAIYIVQLL. The Cytoplasmic portion of the chain corresponds to 691–851; the sequence is SRLRKGYRPV…IRQGAEIALL (161 aa). A YXXV motif; contains endocytosis signal motif is present at residues 697 to 700; that stretch reads YRPV. The S-palmitoyl cysteine; by host moiety is linked to residue C763. Positions 850–851 match the Di-leucine internalization motif motif; sequence LL.

In terms of assembly, the mature envelope protein (Env) consists of a homotrimer of non-covalently associated gp120-gp41 heterodimers. The resulting complex protrudes from the virus surface as a spike. There seems to be as few as 10 spikes on the average virion. Interacts with human CD4, CCR5 and CXCR4, to form a P4HB/PDI-CD4-CXCR4-gp120 complex. Gp120 also interacts with the C-type lectins CD209/DC-SIGN and CLEC4M/DC-SIGNR (collectively referred to as DC-SIGN(R)). Gp120 and gp41 interact with GalCer. The mature envelope protein (Env) consists of a homotrimer of non-covalently associated gp120-gp41 heterodimers. The resulting complex protrudes from the virus surface as a spike. There seems to be as few as 10 spikes on the average virion. In terms of processing, specific enzymatic cleavages in vivo yield mature proteins. Envelope glycoproteins are synthesized as an inactive precursor that is heavily N-glycosylated and processed likely by host cell furin in the Golgi to yield the mature SU and TM proteins. The cleavage site between SU and TM requires the minimal sequence [KR]-X-[KR]-R. Palmitoylation of the transmembrane protein and of Env polyprotein (prior to its proteolytic cleavage) is essential for their association with host cell membrane lipid rafts. Palmitoylation is therefore required for envelope trafficking to classical lipid rafts, but not for viral replication.

It is found in the virion membrane. The protein localises to the host cell membrane. The protein resides in the host endosome membrane. Functionally, the surface protein gp120 (SU) attaches the virus to the host lymphoid cell by binding to the primary receptor CD4. This interaction induces a structural rearrangement creating a high affinity binding site for a chemokine coreceptor like CXCR4 and/or CCR5. This peculiar 2 stage receptor-interaction strategy allows gp120 to maintain the highly conserved coreceptor-binding site in a cryptic conformation, protected from neutralizing antibodies. Since CD4 also displays a binding site for the disulfide-isomerase P4HB/PDI, a P4HB/PDI-CD4-CXCR4-gp120 complex may form. In that complex, P4HB/PDI could reach and reduce gp120 disulfide bonds, causing major conformational changes in gp120. TXN, another PDI family member could also be involved in disulfide rearrangements in Env during fusion. These changes are transmitted to the transmembrane protein gp41 and are thought to activate its fusogenic potential by unmasking its fusion peptide. The surface protein gp120 is a ligand for CD209/DC-SIGN and CLEC4M/DC-SIGNR, which are respectively found on dendritic cells (DCs), and on endothelial cells of liver sinusoids and lymph node sinuses. These interactions allow capture of viral particles at mucosal surfaces by these cells and subsequent transmission to permissive cells. DCs are professional antigen presenting cells, critical for host immunity by inducing specific immune responses against a broad variety of pathogens. They act as sentinels in various tissues where they take up antigen, process it, and present it to T-cells following migration to lymphoid organs. HIV subverts the migration properties of dendritic cells to gain access to CD4+ T-cells in lymph nodes. Virus transmission to permissive T-cells occurs either in trans (without DCs infection, through viral capture and transmission), or in cis (following DCs productive infection, through the usual CD4-gp120 interaction), thereby inducing a robust infection. In trans infection, bound virions remain infectious over days and it is proposed that they are not degraded, but protected in non-lysosomal acidic organelles within the DCs close to the cell membrane thus contributing to the viral infectious potential during DCs' migration from the periphery to the lymphoid tissues. On arrival at lymphoid tissues, intact virions recycle back to DCs' cell surface allowing virus transmission to CD4+ T-cells. Virion capture also seems to lead to MHC-II-restricted viral antigen presentation, and probably to the activation of HIV-specific CD4+ cells. In terms of biological role, the transmembrane protein gp41 (TM) acts as a class I viral fusion protein. Under the current model, the protein has at least 3 conformational states: pre-fusion native state, pre-hairpin intermediate state, and post-fusion hairpin state. During fusion of viral and target intracellular membranes, the coiled coil regions (heptad repeats) assume a trimer-of-hairpins structure, positioning the fusion peptide in close proximity to the C-terminal region of the ectodomain. The formation of this structure appears to drive apposition and subsequent fusion of viral and target cell membranes. Complete fusion occurs in host cell endosomes and is dynamin-dependent, however some lipid transfer might occur at the plasma membrane. The virus undergoes clathrin-dependent internalization long before endosomal fusion, thus minimizing the surface exposure of conserved viral epitopes during fusion and reducing the efficacy of inhibitors targeting these epitopes. Membranes fusion leads to delivery of the nucleocapsid into the cytoplasm. Its function is as follows. The envelope glycoprotein gp160 precursor down-modulates cell surface CD4 antigen by interacting with it in the endoplasmic reticulum and blocking its transport to the cell surface. Functionally, the gp120-gp41 heterodimer seems to contribute to T-cell depletion during HIV-1 infection. The envelope glycoproteins expressed on the surface of infected cells induce apoptosis through an interaction with uninfected cells expressing the receptor (CD4) and the coreceptors CXCR4 or CCR5. This type of bystander killing may be obtained by at least three distinct mechanisms. First, the interaction between the 2 cells can induce cellular fusion followed by nuclear fusion within the syncytium. Syncytia are condemned to die from apoptosis. Second, the 2 interacting cells may not fuse entirely and simply exchange plasma membrane lipids, after a sort of hemifusion process, followed by rapid death. Third, it is possible that virus-infected cells, on the point of undergoing apoptosis, fuse with CD4-expressing cells, in which case apoptosis is rapidly transmitted from one cell to the other and thus occurs in a sort of contagious fashion. The gp120-gp41 heterodimer allows rapid transcytosis of the virus through CD4 negative cells such as simple epithelial monolayers of the intestinal, rectal and endocervical epithelial barriers. Both gp120 and gp41 specifically recognize glycosphingolipids galactosyl-ceramide (GalCer) or 3' sulfo-galactosyl-ceramide (GalS) present in the lipid rafts structures of epithelial cells. Binding to these alternative receptors allows the rapid transcytosis of the virus through the epithelial cells. This transcytotic vesicle-mediated transport of virions from the apical side to the basolateral side of the epithelial cells does not involve infection of the cells themselves. The polypeptide is Envelope glycoprotein gp160 (env) (Human immunodeficiency virus type 2 subtype A (isolate D194) (HIV-2)).